A 782-amino-acid polypeptide reads, in one-letter code: Probable cyclic di-GMP phosphodiesterase PdeI (782 aa).

Helical transmembrane passes span 12–32 and 286–306; these read LIIL…IINY and LFYL…LMTT. The EAL domain occupies 527–781; sequence NIWIARNIRH…AWDKSGKLVK (255 aa).

It localises to the cell membrane. The catalysed reaction is 3',3'-c-di-GMP + H2O = 5'-phosphoguanylyl(3'-&gt;5')guanosine + H(+). Phosphodiesterase (PDE) that catalyzes the hydrolysis of cyclic-di-GMP (c-di-GMP) to 5'-pGpG. Overexpression reduces biofilm formation. Cyclic-di-GMP is a second messenger which controls cell surface-associated traits in bacteria. This chain is Probable cyclic di-GMP phosphodiesterase PdeI, found in Escherichia coli (strain K12).